Consider the following 562-residue polypeptide: NAD-dependent malic enzyme (562 aa).

Catalysis depends on Y101, which acts as the Proton donor. R154 provides a ligand contact to NAD(+). The active-site Proton acceptor is the K172. 3 residues coordinate a divalent metal cation: E243, D244, and D267. NAD(+)-binding residues include D267 and N415.

Belongs to the malic enzymes family. As to quaternary structure, homotetramer. It depends on Mg(2+) as a cofactor. Mn(2+) serves as cofactor.

It carries out the reaction (S)-malate + NAD(+) = pyruvate + CO2 + NADH. The enzyme catalyses oxaloacetate + H(+) = pyruvate + CO2. This Vibrio parahaemolyticus serotype O3:K6 (strain RIMD 2210633) protein is NAD-dependent malic enzyme.